The primary structure comprises 73 residues: Dermaseptin-1 (73 aa).

Residues Met-1–Cys-22 form the signal peptide. The propeptide at Glu-23 to Met-43 is removed in mature form. The interval Glu-25 to Gly-46 is disordered. Residues Glu-30–Gln-40 are compositionally biased toward acidic residues. The residue at position 70 (Leu-70) is a Leucine amide. A propeptide spans Glu-72 to Gln-73 (removed in mature form).

As to expression, expressed by the skin glands.

The protein localises to the secreted. In terms of biological role, has antiparasitic activity against trypomastigote form of T.cruzi (IC(50)=0.68 uM) in vitro but not against L.infantum. Probably acts by permeabilizing cell membranes. In vitro, shows no cytotoxicity against macrophages. Has antibacterial activity. This chain is Dermaseptin-1, found in Pithecopus nordestinus (Northeastern Brazilian leaf frog).